Here is a 66-residue protein sequence, read N- to C-terminus: U1-theraphotoxin-Cg1b (66 aa).

Residues 1-21 form the signal peptide; the sequence is MKTSALFVIFGLVLLFCNSFA. The propeptide occupies 22-29; it reads AELKTTGR. 3 disulfides stabilise this stretch: Cys31–Cys46, Cys38–Cys51, and Cys45–Cys58.

The protein belongs to the neurotoxin 10 (Hwtx-1) family. 46 (Jztx-7/10/12) subfamily. In terms of tissue distribution, expressed by the venom gland.

The protein resides in the secreted. Functionally, probable ion channel inhibitor. The polypeptide is U1-theraphotoxin-Cg1b (Chilobrachys guangxiensis (Chinese earth tiger tarantula)).